We begin with the raw amino-acid sequence, 200 residues long: Cytochrome c biogenesis ATP-binding export protein CcmA (200 aa).

In terms of domain architecture, ABC transporter spans 1–199 (MRLTGRGLRC…AARELRIGGA (199 aa)). 35-42 (GANGAGKT) provides a ligand contact to ATP.

Belongs to the ABC transporter superfamily. CcmA exporter (TC 3.A.1.107) family. The complex is composed of two ATP-binding proteins (CcmA) and two transmembrane proteins (CcmB).

It localises to the cell inner membrane. The enzyme catalyses heme b(in) + ATP + H2O = heme b(out) + ADP + phosphate + H(+). Part of the ABC transporter complex CcmAB involved in the biogenesis of c-type cytochromes; once thought to export heme, this seems not to be the case, but its exact role is uncertain. Responsible for energy coupling to the transport system. The sequence is that of Cytochrome c biogenesis ATP-binding export protein CcmA from Rhodopseudomonas palustris (strain BisB18).